A 2367-amino-acid polypeptide reads, in one-letter code: Toxin B (2367 aa).

Positions 2-91 are four-helical bundle; that stretch reads SLVNRKQLEK…EILELKNSNL (90 aa). Residues 96 to 469 form the GT44 domain; sequence KNLHFIWIGG…YPEANTTITL (374 aa). A glucosyltransferase region region spans residues 96 to 469; the sequence is KNLHFIWIGG…YPEANTTITL (374 aa). Residues 101 to 103, Asn-139, 269 to 273, and 286 to 288 each bind UDP-alpha-D-glucose; these read IWI, SDILR, and DVD. 3 residues coordinate Mg(2+): Asp-286, Asp-288, and Glu-516. Residue 519-521 participates in UDP-alpha-D-glucose binding; the sequence is SLW. The autoprocessing region stretch occupies residues 545–800; that stretch reads GEDDNLDFSQ…KSKNLPELST (256 aa). Glu-546 and Asp-547 together coordinate Zn(2+). The region spanning 568–775 is the Peptidase C80 domain; sequence SSSTKSSERG…EESIIKDISS (208 aa). Residues Tyr-578, Lys-601, and Lys-648 each contribute to the 1D-myo-inositol hexakisphosphate site. His-654 contacts Zn(2+). The active-site For protease activity is the His-654. Cys-699 functions as the Nucleophile; for protease activity in the catalytic mechanism. Zn(2+) is bound at residue His-758. 1D-myo-inositol hexakisphosphate-binding residues include Lys-765, Lys-776, and Lys-793. Residues 801–1501 are translocation region; sequence LLQEIRNNSN…VVLIIKVYMD (701 aa). Interaction with host frizzled receptors FZD1, FZD2 and FZD7 regions lie at residues 1434–1439, 1487–1512, and 1598–1600; these read LKTLMA, SELS…YYSN, and SLK. Cell wall-binding repeat units lie at residues 1833–1852, 1854–1873, 1876–1895, 1926–1945, 1946–1965, 1967–1986, 1987–2006, 2007–2026, 2057–2076, 2077–2097, 2099–2118, 2119–2138, 2139–2158, 2209–2231, 2233–2252, 2253–2272, 2273–2292, 2323–2342, and 2343–2362; these read VSGL…PIKN, ITGF…DNGG, SVGE…NGVL, FTGK…NYRA, AIEW…DTGR, FKGL…DGIM, QKGF…SGVM, KSGY…NGEM, YSGI…SFTA, VVGW…NTAE, SIGI…SGIM, QIGF…SGIV, ESGM…NGLV, ETGW…EAKK, YKGI…NGIM, RTGL…DGEM, QYGY…DGIM, YTGW…EYIA, and ATGS…DTAQ. A receptor-binding (CROPS) region region spans residues 1835–2367; the sequence is GLVYINDSLY…PDTAQLVISE (533 aa).

The protein belongs to the clostridial glucosylating toxin (LCGT) family. Interacts with host FZD1. Interacts with host FZD2; interaction promotes toxin entry into host cell and occupies the binding site for Wnt-adducted palmitoleate in FZD2, leading to prevent Wnt-binding and downstream Wnt signaling. Interacts with host FZD7. Interacts with host CSPG4. Interacts with host NECTIN3/PVRL3. The cofactor is Zn(2+). Requires Mn(2+) as cofactor. It depends on Mg(2+) as a cofactor. Undergoes autocatalytic cleavage to release the N-terminal part (Glucosyltransferase TcdB), which constitutes the active part of the toxin, in the host cytosol. 1D-myo-inositol hexakisphosphate-binding (InsP6) activates the peptidase C80 domain and promotes autoprocessing.

The protein localises to the secreted. The protein resides in the host endosome membrane. It is found in the host cytoplasm. Its subcellular location is the host cytosol. It localises to the host cell membrane. The catalysed reaction is L-threonyl-[protein] + UDP-alpha-D-glucose = 3-O-(alpha-D-glucosyl)-L-threonyl-[protein] + UDP + H(+). With respect to regulation, protease activity is activated upon binding to 1D-myo-inositol hexakisphosphate (InsP6), which induces conformational reorganization. Its function is as follows. Precursor of a cytotoxin that targets and disrupts the colonic epithelium, inducing the host inflammatory and innate immune responses and resulting in diarrhea and pseudomembranous colitis. TcdB constitutes the main toxin that mediates the pathology of C.difficile infection, an opportunistic pathogen that colonizes the colon when the normal gut microbiome is disrupted. Compared to TcdA, TcdB is more virulent and more important for inducing the host inflammatory and innate immune responses. This form constitutes the precursor of the toxin: it enters into host cells and mediates autoprocessing to release the active toxin (Glucosyltransferase TcdB) into the host cytosol. Targets colonic epithelia by binding to the frizzled receptors FZD1, FZD2 and FZD7, and enters host cells via clathrin-mediated endocytosis. Frizzled receptors constitute the major host receptors in the colonic epithelium, but other receptors, such as CSPG4 or NECTIN3/PVRL3, have been identified. Binding to carbohydrates and sulfated glycosaminoglycans on host cell surface also contribute to entry into cells. Once entered into host cells, acidification in the endosome promotes the membrane insertion of the translocation region and formation of a pore, leading to translocation of the GT44 and peptidase C80 domains across the endosomal membrane. This activates the peptidase C80 domain and autocatalytic processing, releasing the N-terminal part (Glucosyltransferase TcdB), which constitutes the active part of the toxin, in the cytosol. Functionally, active form of the toxin, which is released into the host cytosol following autoprocessing and inactivates small GTPases. Acts by mediating monoglucosylation of small GTPases of the Rho family (Rac1, RhoA, RhoB, RhoC, RhoG and Cdc42) in host cells at the conserved threonine residue located in the switch I region ('Thr-37/35'), using UDP-alpha-D-glucose as the sugar donor. Monoglucosylation of host small GTPases completely prevents the recognition of the downstream effector, blocking the GTPases in their inactive form, leading to actin cytoskeleton disruption and cell death, resulting in the loss of colonic epithelial barrier function. The protein is Toxin B of Clostridioides difficile (Peptoclostridium difficile).